Consider the following 501-residue polypeptide: Phosphatase and actin regulator 1 (501 aa).

An RPEL 1 repeat occupies 1–18; sequence MRQSREELIKRGVLKEIF. Disordered stretches follow at residues 21–46 and 295–329; these read DGEL…QVLS and DNKE…EDNS. Residues 36 to 46 show a composition bias toward low complexity; sequence GQPLGSGQVLS. The segment covering 295-304 has biased composition (basic and acidic residues); it reads DNKENVPHEA. Over residues 317 to 328 the composition is skewed to acidic residues; that stretch reads EEEEEEDEDEDN. RPEL repeat units lie at residues 343 to 368, 381 to 406, and 419 to 444; these read DSLA…PMQT, TKLT…KPRN, and RRLT…IRFS. The disordered stretch occupies residues 382–415; the sequence is KLTRRLSQRPTAEELEQRNILKPRNEQEEQEEKR. The segment covering 392–415 has biased composition (basic and acidic residues); sequence TAEELEQRNILKPRNEQEEQEEKR.

The protein belongs to the phosphatase and actin regulator family. As to quaternary structure, interacts (via RPEL repeats) with ACTA1. Expressed in the gizzard, and in neurons from central and peripheral nervous systems.

The protein localises to the cytoplasm. Its subcellular location is the synapse. It localises to the nucleus. Binds actin monomers (G actin) and plays a role in the reorganization of the actin cytoskeleton and in formation of actin stress fibers. The sequence is that of Phosphatase and actin regulator 1 (PHACTR1) from Gallus gallus (Chicken).